Here is a 140-residue protein sequence, read N- to C-terminus: Thioredoxin M-type, chloroplastic (140 aa).

The N-terminal 34 residues, 1–34 (MALVARRAAVPSARSSARPAFARAAPRRSVVVRA), are a transit peptide targeting the chloroplast. Positions 35–140 (EAGAVNDDTF…IVQTVEKYLN (106 aa)) constitute a Thioredoxin domain. Catalysis depends on nucleophile residues Cys64 and Cys67. Cys64 and Cys67 are disulfide-bonded.

Belongs to the thioredoxin family. Plant M-type subfamily. As to quaternary structure, forms a complex with heterodimeric ferredoxin-thioredoxin reductase (FTR) and ferredoxin.

Its subcellular location is the plastid. It is found in the chloroplast. Participates in various redox reactions through the reversible oxidation of the active center dithiol to a disulfide. The M form is known to activate NADP-malate dehydrogenase. The protein is Thioredoxin M-type, chloroplastic (TRXM) of Chlamydomonas reinhardtii (Chlamydomonas smithii).